The sequence spans 309 residues: Cytochrome c biogenesis protein CcsA (309 aa).

A run of 8 helical transmembrane segments spans residues 18-38 (LGLL…GAFF), 43-63 (FFIV…QLLF), 67-87 (ISGH…TWGI), 102-122 (IIPS…CFVL), 148-168 (VMLS…VLFI), 216-236 (SILI…VWAN), 250-267 (TWAF…HMRI), and 279-299 (LATT…FLGI).

Belongs to the CcmF/CycK/Ccl1/NrfE/CcsA family. May interact with ccs1.

The protein resides in the cellular thylakoid membrane. Functionally, required during biogenesis of c-type cytochromes (cytochrome c6 and cytochrome f) at the step of heme attachment. This is Cytochrome c biogenesis protein CcsA from Prochlorococcus marinus (strain MIT 9215).